Consider the following 441-residue polypeptide: Proline--tRNA ligase (441 aa).

This sequence belongs to the class-II aminoacyl-tRNA synthetase family. ProS type 2 subfamily. In terms of assembly, homodimer.

It is found in the cytoplasm. It catalyses the reaction tRNA(Pro) + L-proline + ATP = L-prolyl-tRNA(Pro) + AMP + diphosphate. Catalyzes the attachment of proline to tRNA(Pro) in a two-step reaction: proline is first activated by ATP to form Pro-AMP and then transferred to the acceptor end of tRNA(Pro). This is Proline--tRNA ligase from Bartonella quintana (strain Toulouse) (Rochalimaea quintana).